A 507-amino-acid polypeptide reads, in one-letter code: ATP synthase subunit alpha, chloroplastic (507 aa).

Glycine 170–threonine 177 is an ATP binding site.

This sequence belongs to the ATPase alpha/beta chains family. In terms of assembly, F-type ATPases have 2 components, CF(1) - the catalytic core - and CF(0) - the membrane proton channel. CF(1) has five subunits: alpha(3), beta(3), gamma(1), delta(1), epsilon(1). CF(0) has four main subunits: a, b, b' and c.

The protein resides in the plastid. It localises to the chloroplast thylakoid membrane. It carries out the reaction ATP + H2O + 4 H(+)(in) = ADP + phosphate + 5 H(+)(out). In terms of biological role, produces ATP from ADP in the presence of a proton gradient across the membrane. The alpha chain is a regulatory subunit. This is ATP synthase subunit alpha, chloroplastic from Marchantia polymorpha (Common liverwort).